A 361-amino-acid polypeptide reads, in one-letter code: MATLARLQARSSTVGNQYYFRNSVVDPFRIKENDAAVKIQSWFRGCQVRAYVRHLNRIVTIIQKWWRSFLGRKQYQLTVQVAYYTMMMNLYNAMAVRKQRRWRGYRVRKYLFNYYYLKEYLRVVSETNDAIRKALEEFAEMKEREEKKANLEREEKKRDYQARKMHYLLSTKQIPGIYNSPFRKEPDPWELQLQKAKPLTHRRPKVKQKDSTSLNDWLACTSARSFPRSEILPPINRKQCQGPFRDITEVLEQRYKPLEPTLWVAEPIDELKLAREELRREEWLRNVNDNMFLPFSSYHKNEKYIPSMHLSSKYCPISHKEQFRSENPKKWICDKDFQTVLPSFELFSKYGKLYSKAGQIV.

3 consecutive IQ domains span residues 32–61, 55–84, and 91–120; these read ENDA…IVTI, LNRI…VAYY, and YNAM…LKEY.

The protein resides in the cytoplasm. This chain is Spermatogenesis-associated protein 17 (SPATA17), found in Macaca fascicularis (Crab-eating macaque).